Reading from the N-terminus, the 1383-residue chain is DNA-directed RNA polymerase subunit beta (1383 aa).

Belongs to the RNA polymerase beta chain family. In terms of assembly, the RNAP catalytic core consists of 2 alpha, 1 beta, 1 beta' and 1 omega subunit. When a sigma factor is associated with the core the holoenzyme is formed, which can initiate transcription.

It carries out the reaction RNA(n) + a ribonucleoside 5'-triphosphate = RNA(n+1) + diphosphate. In terms of biological role, DNA-dependent RNA polymerase catalyzes the transcription of DNA into RNA using the four ribonucleoside triphosphates as substrates. The chain is DNA-directed RNA polymerase subunit beta from Xanthomonas euvesicatoria pv. vesicatoria (strain 85-10) (Xanthomonas campestris pv. vesicatoria).